Consider the following 703-residue polypeptide: tRNA 5-methylaminomethyl-2-thiouridine biosynthesis bifunctional protein MnmC (703 aa).

The tract at residues 1–281 (MTAKPQKSCQ…KPAALVAKDH (281 aa)) is tRNA (mnm(5)s(2)U34)-methyltransferase. Residues 286-703 (VGGGLASANL…LRKLLKGKAL (418 aa)) are FAD-dependent cmnm(5)s(2)U34 oxidoreductase.

It in the N-terminal section; belongs to the methyltransferase superfamily. tRNA (mnm(5)s(2)U34)-methyltransferase family. The protein in the C-terminal section; belongs to the DAO family. Requires FAD as cofactor.

The protein localises to the cytoplasm. It carries out the reaction 5-aminomethyl-2-thiouridine(34) in tRNA + S-adenosyl-L-methionine = 5-methylaminomethyl-2-thiouridine(34) in tRNA + S-adenosyl-L-homocysteine + H(+). In terms of biological role, catalyzes the last two steps in the biosynthesis of 5-methylaminomethyl-2-thiouridine (mnm(5)s(2)U) at the wobble position (U34) in tRNA. Catalyzes the FAD-dependent demodification of cmnm(5)s(2)U34 to nm(5)s(2)U34, followed by the transfer of a methyl group from S-adenosyl-L-methionine to nm(5)s(2)U34, to form mnm(5)s(2)U34. In Shewanella sp. (strain MR-7), this protein is tRNA 5-methylaminomethyl-2-thiouridine biosynthesis bifunctional protein MnmC.